A 1526-amino-acid polypeptide reads, in one-letter code: Ig-like and fibronectin type-III domain-containing protein 2 (1526 aa).

An N-terminal signal peptide occupies residues 1 to 19 (MMRWRLAVLFLTLLASTTG). The segment at 20 to 39 (DDTTTKASVSTTTKKGTDGP) is disordered. Residues 20-1415 (DDTTTKASVS…RRSASKGSSS (1396 aa)) lie on the Extracellular side of the membrane. The segment covering 24 to 33 (TKASVSTTTK) has biased composition (low complexity). In terms of domain architecture, Ig-like C2-type 1 spans 39–170 (PHLTTDDEGF…ELLEFQVEVL (132 aa)). A disulfide bridge links C61 with C154. N87, N143, N158, N181, N414, N427, N475, N489, N533, N590, N617, and N662 each carry an N-linked (GlcNAc...) asparagine glycan. Residues 379-470 (APRGKRDVDF…VRNIASTNVH (92 aa)) form the Fibronectin type-III 1 domain. The Fibronectin type-III 2 domain maps to 587–678 (APGNVTISEL…TAKLFSTLPT (92 aa)). The WR1 domain maps to 682–724 (PLCTIGEPIYMNDGRVMICDAVNPCPNGFRCTGAGSDLSYCCP). N754, N871, N906, N939, N979, N1004, and N1049 each carry an N-linked (GlcNAc...) asparagine glycan. 2 Fibronectin type-III domains span residues 827–914 (AVRN…TKPA) and 924–1020 (APEK…AQKD). The Ig-like C2-type 2 domain occupies 1116–1207 (ASVTMKKDKI…SRVEASSEVI (92 aa)). A disulfide bridge connects residues C1137 and C1190. N1250 carries an N-linked (GlcNAc...) asparagine glycan. The 93-residue stretch at 1314-1406 (APSEVSNVRI…SAIPKDSEPR (93 aa)) folds into the Fibronectin type-III 5 domain. A helical membrane pass occupies residues 1416–1436 (AFWIVVILVVFGVLIAGLAVL). The Cytoplasmic segment spans residues 1437–1526 (SKRRELPYPI…NGMRYAKLET (90 aa)). A disordered region spans residues 1485–1518 (SATTGTAAATQSEWQSANLEANSTTDNSHEYRNG). Over residues 1495–1510 (QSEWQSANLEANSTTD) the composition is skewed to polar residues.

The protein resides in the cell membrane. This chain is Ig-like and fibronectin type-III domain-containing protein 2, found in Caenorhabditis elegans.